The chain runs to 155 residues: Transcriptional repressor NrdR (155 aa).

A zinc finger lies at Cys-3 to Cys-34. The ATP-cone domain maps to Pro-49–Glu-139.

The protein belongs to the NrdR family. It depends on Zn(2+) as a cofactor.

Negatively regulates transcription of bacterial ribonucleotide reductase nrd genes and operons by binding to NrdR-boxes. In Ectopseudomonas mendocina (strain ymp) (Pseudomonas mendocina), this protein is Transcriptional repressor NrdR.